We begin with the raw amino-acid sequence, 250 residues long: Non-specific acid phosphatase (250 aa).

The N-terminal stretch at 1-20 is a signal peptide; the sequence is MKSRYLVFFLPLIVAKYTSA.

Belongs to the class A bacterial acid phosphatase family. In terms of assembly, homodimer.

The protein resides in the periplasm. The enzyme catalyses a phosphate monoester + H2O = an alcohol + phosphate. This chain is Non-specific acid phosphatase (phoN), found in Salmonella typhimurium (strain LT2 / SGSC1412 / ATCC 700720).